The sequence spans 136 residues: Large ribosomal subunit protein uL16 (136 aa).

Belongs to the universal ribosomal protein uL16 family. As to quaternary structure, part of the 50S ribosomal subunit.

Its function is as follows. Binds 23S rRNA and is also seen to make contacts with the A and possibly P site tRNAs. This is Large ribosomal subunit protein uL16 from Ehrlichia chaffeensis (strain ATCC CRL-10679 / Arkansas).